A 237-amino-acid chain; its full sequence is DNA repair protein RecO (237 aa).

This sequence belongs to the RecO family.

Functionally, involved in DNA repair and RecF pathway recombination. This is DNA repair protein RecO from Flavobacterium johnsoniae (strain ATCC 17061 / DSM 2064 / JCM 8514 / BCRC 14874 / CCUG 350202 / NBRC 14942 / NCIMB 11054 / UW101) (Cytophaga johnsonae).